Reading from the N-terminus, the 215-residue chain is Large ribosomal subunit protein bL25 (215 aa).

The span at 192-203 (EEATEEEEEAAE) shows a compositional bias: acidic residues. Residues 192–215 (EEATEEEEEAAEPEVIKRKEEEEE) are disordered. A compositionally biased stretch (basic and acidic residues) spans 205–215 (EVIKRKEEEEE).

The protein belongs to the bacterial ribosomal protein bL25 family. CTC subfamily. Part of the 50S ribosomal subunit; part of the 5S rRNA/L5/L18/L25 subcomplex. Contacts the 5S rRNA. Binds to the 5S rRNA independently of L5 and L18.

This is one of the proteins that binds to the 5S RNA in the ribosome where it forms part of the central protuberance. The chain is Large ribosomal subunit protein bL25 from Thermotoga maritima (strain ATCC 43589 / DSM 3109 / JCM 10099 / NBRC 100826 / MSB8).